The sequence spans 800 residues: Phosphoinositide 3-kinase adapter protein 1 (800 aa).

One can recognise a TIR domain in the interval 8 to 145; that stretch reads GGYDVLILYA…AVKKAISEDS (138 aa). The segment at 10–144 is necessary and sufficient to mediate inhibition of NF-kappa-B downstream of activated TLRs; sequence YDVLILYASD…EAVKKAISED (135 aa). In terms of domain architecture, DBB spans 185 to 321; it reads VQPDHIRCGV…NIPASGLHLF (137 aa). Residue Y266 is modified to Phosphotyrosine. 3 positions are modified to phosphotyrosine; by SYK: Y423, Y448, and Y463. Residues 527 to 548 are disordered; it reads EMASRPPVPVPRPESSSPQPDN. Residues 643–663 are a coiled coil; it reads QQENLKRLRDSITRRQMEKQK. Residues 702–713 are compositionally biased toward basic and acidic residues; that stretch reads PKKELKRGDWKT. The interval 702-800 is disordered; that stretch reads PKKELKRGDW…YPPPVPPRGR (99 aa). Residues 714–737 show a composition bias toward low complexity; it reads ESTSSTTSSASNRSSTRSILSVSS. Over residues 749–759 the composition is skewed to polar residues; the sequence is SEASRSRSPIP. Pro residues-rich tracts occupy residues 767–777 and 791–800; these read LPLPERPPRVP and YPPPVPPRGR.

In terms of assembly, homooligomer. Interacts (phosphorylated on tyrosine residues within YXXM motifs) with PIK3R1 (via SH2 domain); required for BCR- and TLR-mediated activation of phosphoinositide 3-kinase. Constitutively phosphorylated. Phosphorylated on tyrosine residues within the YXXM motifs by BTK and SYK. Isoform 1 and isoform 2 are phosphorylated on tyrosine residues, most likely within the YXXM motifs, via CD19 activation.

It localises to the cytoplasm. Its subcellular location is the cell membrane. Its function is as follows. Signaling adapter that contributes to B-cell development by linking B-cell receptor (BCR) signaling to the phosphoinositide 3-kinase (PI3K)-Akt signaling pathway. Has a complementary role to the BCR coreceptor CD19, coupling BCR and PI3K activation by providing a docking site for the PI3K subunit PIK3R1. Alternatively, links Toll-like receptor (TLR) signaling to PI3K activation, a process preventing excessive inflammatory cytokine production. Also involved in the activation of PI3K in natural killer cells. May be involved in the survival of mature B-cells via activation of REL. This chain is Phosphoinositide 3-kinase adapter protein 1 (PIK3AP1), found in Gallus gallus (Chicken).